The chain runs to 619 residues: 1-deoxy-D-xylulose-5-phosphate synthase (619 aa).

Residues H74 and 115 to 117 each bind thiamine diphosphate; that span reads GHS. D146 is a binding site for Mg(2+). Residues 147–148, N175, Y285, and E365 contribute to the thiamine diphosphate site; that span reads GA. Position 175 (N175) interacts with Mg(2+).

This sequence belongs to the transketolase family. DXPS subfamily. As to quaternary structure, homodimer. Mg(2+) is required as a cofactor. Requires thiamine diphosphate as cofactor.

It carries out the reaction D-glyceraldehyde 3-phosphate + pyruvate + H(+) = 1-deoxy-D-xylulose 5-phosphate + CO2. The protein operates within metabolic intermediate biosynthesis; 1-deoxy-D-xylulose 5-phosphate biosynthesis; 1-deoxy-D-xylulose 5-phosphate from D-glyceraldehyde 3-phosphate and pyruvate: step 1/1. Catalyzes the acyloin condensation reaction between C atoms 2 and 3 of pyruvate and glyceraldehyde 3-phosphate to yield 1-deoxy-D-xylulose-5-phosphate (DXP). This Clostridium perfringens (strain 13 / Type A) protein is 1-deoxy-D-xylulose-5-phosphate synthase.